Here is a 415-residue protein sequence, read N- to C-terminus: Methylmalonic aciduria type A homolog, mitochondrial (415 aa).

The N-terminal 62 residues, 1 to 62 (MTISTLLLSP…LLSDGFRRTL (62 aa)), are a transit peptide targeting the mitochondrion. GTP contacts are provided by residues 147–155 (GPPGAGKST), D289, and 325–327 (SAR).

The protein belongs to the SIMIBI class G3E GTPase family. ArgK/MeaB subfamily. Homodimer. Interacts with MMUT (the apoenzyme form); the interaction is GTP dependent.

It is found in the mitochondrion. Its subcellular location is the cytoplasm. It carries out the reaction GTP + H2O = GDP + phosphate + H(+). Its activity is regulated as follows. GTPase activity is stimulated by MMUT. Its function is as follows. GTPase, binds and hydrolyzes GTP. Involved in intracellular vitamin B12 metabolism, mediates the transport of cobalamin (Cbl) into mitochondria for the final steps of adenosylcobalamin (AdoCbl) synthesis. Functions as a G-protein chaperone that assists AdoCbl cofactor delivery from MMAB to the methylmalonyl-CoA mutase (MMUT). Plays a dual role as both a protectase and a reactivase for MMUT. Protects MMUT from progressive inactivation by oxidation by decreasing the rate of the formation of the oxidized inactive cofactor hydroxocobalamin (OH2Cbl). Additionally acts a reactivase by promoting the replacement of OH2Cbl by the active cofactor AdoCbl, restoring the activity of MMUT in the presence and hydrolysis of GTP. In Mus musculus (Mouse), this protein is Methylmalonic aciduria type A homolog, mitochondrial.